The following is a 554-amino-acid chain: Solute carrier family 22 member 1 (554 aa).

The Cytoplasmic portion of the chain corresponds to Met1–Asn24. Residues Leu25 to Thr45 form a helical membrane-spanning segment. Over Pro46–Thr234 the chain is Extracellular. The N-linked (GlcNAc...) asparagine glycan is linked to Asn71. A helical membrane pass occupies residues Val235 to Tyr255. Residues Ala256–Arg261 are Cytoplasmic-facing. Residues Ser262–Pro282 traverse the membrane as a helical segment. Positions Pro282 to Arg286 match the Proline-rich sequence motif. Residues Glu283 to Thr347 are Extracellular-facing. Residue Ser333 is modified to Phosphoserine. Residues Phe348 to Val368 traverse the membrane as a helical segment. Residues Gly369–Tyr376 lie on the Cytoplasmic side of the membrane. A helical membrane pass occupies residues Leu377 to Ile397. Residues Asp398 to Arg402 are Extracellular-facing. Residues Leu403–Ile423 traverse the membrane as a helical segment. Residues Ser424–Ser431 lie on the Cytoplasmic side of the membrane. The chain crosses the membrane as a helical span at residues Ile432–Val452. Topologically, residues Ser453–Leu464 are extracellular. Residues Gly465–Phe485 traverse the membrane as a helical segment. Topologically, residues Arg486–Arg492 are cytoplasmic. The chain crosses the membrane as a helical span at residues Gly493–Leu513. Topologically, residues Pro514–Leu554 are extracellular.

This sequence belongs to the major facilitator (TC 2.A.1) superfamily. Organic cation transporter (TC 2.A.1.19) family. Post-translationally, phosphorylated.

Its subcellular location is the basolateral cell membrane. It localises to the apical cell membrane. It is found in the lateral cell membrane. The protein localises to the basal cell membrane. The protein resides in the cell membrane. It catalyses the reaction 1-methylnicotinamide(out) = 1-methylnicotinamide(in). It carries out the reaction dopamine(out) = dopamine(in). The enzyme catalyses serotonin(out) = serotonin(in). The catalysed reaction is (R)-adrenaline(out) = (R)-adrenaline(in). It catalyses the reaction (R)-noradrenaline(out) = (R)-noradrenaline(in). It carries out the reaction histamine(out) = histamine(in). The enzyme catalyses guanidine(out) = guanidine(in). The catalysed reaction is choline(out) = choline(in). It catalyses the reaction acetylcholine(in) = acetylcholine(out). It carries out the reaction thiamine(in) = thiamine(out). The enzyme catalyses spermidine(in) = spermidine(out). The catalysed reaction is agmatine(out) = agmatine(in). It catalyses the reaction putrescine(out) = putrescine(in). It carries out the reaction (R)-carnitine(in) = (R)-carnitine(out). The enzyme catalyses O-isobutanoyl-(R)-carnitine(in) = O-isobutanoyl-(R)-carnitine(out). The catalysed reaction is O-acetyl-(R)-carnitine(in) = O-acetyl-(R)-carnitine(out). It catalyses the reaction O-3-hydroxybutanoyl-(R)-carnitine(in) = O-3-hydroxybutanoyl-(R)-carnitine(out). It carries out the reaction O-propanoyl-(R)-carnitine(in) = O-propanoyl-(R)-carnitine(out). The enzyme catalyses O-butanoyl-(R)-carnitine(in) = O-butanoyl-(R)-carnitine(out). The catalysed reaction is O-2-methylbutanoyl-(R)-carnitine(in) = O-2-methylbutanoyl-(R)-carnitine(out). It catalyses the reaction O-3-methylbutanoyl-(R)-carnitine(in) = O-3-methylbutanoyl-(R)-carnitine(out). It carries out the reaction O-hexanoyl-(R)-carnitine(in) = O-hexanoyl-(R)-carnitine(out). The enzyme catalyses L-histidyl-L-proline diketopiperazine(in) = L-histidyl-L-proline diketopiperazine(out). The catalysed reaction is (R)-salsolinol(in) = (R)-salsolinol(out). It catalyses the reaction prostaglandin F2alpha(out) = prostaglandin F2alpha(in). It carries out the reaction prostaglandin E2(out) = prostaglandin E2(in). Phosphorylation of the transporter leads to changes in its substrate affinity, resulting in a regulation of the transport activity. In contrast with rat ortholog, ASP uptake is inhibited by protein kinase A (PKA) and C (PKC) activation. ASP uptake is also endogenously activated by calmodulin, the calmodulin-dependent kinase II and LCK tyrosine kinase. Inhibited by cGMP, most likely through a cGMP-binding protein that interacts with OCT1. Its function is as follows. Electrogenic voltage-dependent transporter that mediates the transport of a variety of organic cations such as endogenous bioactive amines, cationic drugs and xenobiotics. Functions as a pH- and Na(+)-independent, bidirectional transporter. Cation cellular uptake or release is driven by the electrochemical potential (i.e. membrane potential and concentration gradient) and substrate selectivity. Hydrophobicity is a major requirement for recognition in polyvalent substrates and inhibitors. Primarily expressed in the basolateral membrane of hepatocytes and proximal tubules and involved in the uptake and disposition of cationic compounds from the blood by hepatic and renal clearance. Most likely functions as an uptake carrier in enterocytes contributing to the intestinal elimination of organic cations from the systemic circulation. Transports endogenous monoamines such as N-1-methylnicotinamide (NMN), guanidine, neurotransmitters dopamine, serotonin, noradrenaline, adrenaline and histamine, and quaternary ammonium compound such as choline. Also transports natural polyamines such as spermidine, agmatine and putrescine at low affinity, but relatively high turnover. Involved in the hepatic and intestinal uptake of the vitamin B1/thiamine, hence regulating hepatic lipid and energy metabolism. Contributes to the influx and efflux of fatty acid carriers carnitines and acylcarnitines across the basolateral membrane of hepatocytes, from the liver to the systemic circulation and inversely and may be involved in regulating the systemic availability of hepatic acylcarnitines. Also capable of transporting non-amine endogenous compounds such as prostaglandin E2 (PGE2) and prostaglandin F2-alpha (PGF2-alpha). May contribute to the transport of cationic compounds in testes across the blood-testis-barrier. Also mediates the uptake of xenobiotics tributylmethylammonium (TBuMA), quinidine, N-methyl-quinine (NMQ), N-methyl-quinidine (NMQD) N-(4,4-azo-n-pentyl)-quinuclidine (APQ), azidoprocainamide methoiodide (AMP), N-(4,4-azo-n-pentyl)-21-deoxyajmalinium (APDA) and 4-(4-(dimethylamino)styryl)-N-methylpyridinium (ASP). The sequence is that of Solute carrier family 22 member 1 (SLC22A1) from Sus scrofa (Pig).